The chain runs to 161 residues: Putative pre-16S rRNA nuclease (161 aa).

A disordered region spans residues A142–A161.

Belongs to the YqgF nuclease family.

The protein localises to the cytoplasm. Its function is as follows. Could be a nuclease involved in processing of the 5'-end of pre-16S rRNA. In Clavibacter sepedonicus (Clavibacter michiganensis subsp. sepedonicus), this protein is Putative pre-16S rRNA nuclease.